The chain runs to 206 residues: Large ribosomal subunit protein uL4 (206 aa).

The segment at 43-78 (NQRQGTHDTKTRAEVRGGGRKPWRQKGTGRARAGSS) is disordered. Residues 47 to 59 (GTHDTKTRAEVRG) show a composition bias toward basic and acidic residues. Over residues 60–71 (GGRKPWRQKGTG) the composition is skewed to basic residues.

The protein belongs to the universal ribosomal protein uL4 family. In terms of assembly, part of the 50S ribosomal subunit.

In terms of biological role, one of the primary rRNA binding proteins, this protein initially binds near the 5'-end of the 23S rRNA. It is important during the early stages of 50S assembly. It makes multiple contacts with different domains of the 23S rRNA in the assembled 50S subunit and ribosome. Its function is as follows. Forms part of the polypeptide exit tunnel. This is Large ribosomal subunit protein uL4 from Desulforamulus reducens (strain ATCC BAA-1160 / DSM 100696 / MI-1) (Desulfotomaculum reducens).